Consider the following 250-residue polypeptide: DNA repair protein RecO (250 aa).

This sequence belongs to the RecO family.

In terms of biological role, involved in DNA repair and RecF pathway recombination. The sequence is that of DNA repair protein RecO from Syntrophobacter fumaroxidans (strain DSM 10017 / MPOB).